The sequence spans 428 residues: Tyrosine--tRNA ligase (428 aa).

Y41 is a binding site for L-tyrosine. Positions 46–55 match the 'HIGH' region motif; that stretch reads PTADSLHLGH. K148 is modified (N6-acetyllysine). L-tyrosine is bound by residues Y179 and Q183. The 'KMSKS' region motif lies at 239–243; sequence KFGKT. K242 provides a ligand contact to ATP. The S4 RNA-binding domain maps to 361 to 418; the sequence is ADLMQALVDSELQPSRGQARKTIASNAITINGEKQSDPEYFFKEEDRLFGRFTLLRRG.

The protein belongs to the class-I aminoacyl-tRNA synthetase family. TyrS type 1 subfamily. Homodimer.

The protein resides in the cytoplasm. It carries out the reaction tRNA(Tyr) + L-tyrosine + ATP = L-tyrosyl-tRNA(Tyr) + AMP + diphosphate + H(+). Its function is as follows. Catalyzes the attachment of tyrosine to tRNA(Tyr) in a two-step reaction: tyrosine is first activated by ATP to form Tyr-AMP and then transferred to the acceptor end of tRNA(Tyr). In Escherichia coli O1:K1 / APEC, this protein is Tyrosine--tRNA ligase.